The sequence spans 466 residues: Chromosomal replication initiator protein DnaA (466 aa).

Residues 1–86 (MSLSLWQQCL…EVGTKPVTQT (86 aa)) are domain I, interacts with DnaA modulators. The interval 86–129 (TLKTPVHNVVAPTQTTTAQPQRVAPAARSGWDNVPAPAEPTYRS) is domain II. Residues 130–346 (NVNVKHTFDN…GALNRVIANA (217 aa)) are domain III, AAA+ region. ATP contacts are provided by G174, G176, K177, and T178. Residues 347–466 (NFTGRAITID…FSNLIRTLSS (120 aa)) form a domain IV, binds dsDNA region.

The protein belongs to the DnaA family. As to quaternary structure, oligomerizes as a right-handed, spiral filament on DNA at oriC.

The protein resides in the cytoplasm. Functionally, plays an essential role in the initiation and regulation of chromosomal replication. ATP-DnaA binds to the origin of replication (oriC) to initiate formation of the DNA replication initiation complex once per cell cycle. Binds the DnaA box (a 9 base pair repeat at the origin) and separates the double-stranded (ds)DNA. Forms a right-handed helical filament on oriC DNA; dsDNA binds to the exterior of the filament while single-stranded (ss)DNA is stabiized in the filament's interior. The ATP-DnaA-oriC complex binds and stabilizes one strand of the AT-rich DNA unwinding element (DUE), permitting loading of DNA polymerase. After initiation quickly degrades to an ADP-DnaA complex that is not apt for DNA replication. Binds acidic phospholipids. In Salmonella gallinarum (strain 287/91 / NCTC 13346), this protein is Chromosomal replication initiator protein DnaA.